The sequence spans 446 residues: D(1A) dopamine receptor (446 aa).

Residues 1-23 (MRTLNTSTMEGTGLVAERDFSFR) lie on the Extracellular side of the membrane. An N-linked (GlcNAc...) asparagine glycan is attached at Asn-5. A helical transmembrane segment spans residues 24 to 49 (ILTACFLSLLILSTLLGNTLVCAAVI). Over 50 to 60 (RFRHLRSKVTN) the chain is Cytoplasmic. Residues 61-87 (FFVISLAVSDLLVAVLVMPWKAVAEIA) traverse the membrane as a helical segment. Residues 88-96 (GFWPFGSFC) lie on the Extracellular side of the membrane. A disulfide bridge links Cys-96 with Cys-186. A helical transmembrane segment spans residues 97 to 119 (NIWVAFDIMCSTASILNLCVISV). Topologically, residues 120-138 (DRYWAISSPFRYERKMTPK) are cytoplasmic. The helical transmembrane segment at 139 to 163 (AAFILISVAWTLSVLISFIPVQLSW) threads the bilayer. Residues 164 to 192 (HKAKPTGPSEGNATSLGKTINNCDSSLSR) are Extracellular-facing. An N-linked (GlcNAc...) asparagine glycan is attached at Asn-175. Residues 193–218 (TYAISSSLISFYIPVAIMIVTYTRIY) form a helical membrane-spanning segment. Topologically, residues 219–272 (RIAQKQIRRISALERAAVHAKNCQTTTGNGNPMECSQPESSFKMSFKRETKVLK) are cytoplasmic. The helical transmembrane segment at 273–299 (TLSVIMGVFVCCWLPFFILNCMVPFCG) threads the bilayer. Residues 300–312 (SGETKPFCIDSIT) lie on the Extracellular side of the membrane. A helical transmembrane segment spans residues 313-337 (FDVFVWFGWANSSLNPIIYAFNADF). At 338–446 (RKAFSTLLGC…PITQNGQHPT (109 aa)) the chain is on the cytoplasmic side. 2 S-palmitoyl cysteine lipidation sites follow: Cys-347 and Cys-351.

This sequence belongs to the G-protein coupled receptor 1 family. In terms of assembly, interacts with DNAJC14 via its C-terminus. Interacts with DRD2. Interacts with DORIP1.

The protein resides in the cell membrane. It is found in the endoplasmic reticulum membrane. The protein localises to the cell projection. Its subcellular location is the cilium membrane. It localises to the dendrite. The protein resides in the dendritic spine. Dopamine receptor whose activity is mediated by G proteins which activate adenylyl cyclase. The polypeptide is D(1A) dopamine receptor (DRD1) (Bos taurus (Bovine)).